The primary structure comprises 642 residues: Regulator of MON1-CCZ1 complex (642 aa).

Positions 462 to 616 constitute a Mic1 domain; it reads RPYTESILML…KLYETLSFPK (155 aa).

This sequence belongs to the RMC1 family. As to quaternary structure, component of the Mon1-Ccz1 guanyl-nucleotide exchange factor complex made up of Mon1, Ccz1 and Bulli; the interaction of Bulli with the Mon1-Ccz1 heterodimer is mediated via the C-terminal Mic1 domain of Bulli. Mon1 and Ccz1 form a stable complex which displays Rab7 GEF activity with or without Bulli; GEF activity is enhanced by Bulli possibly by improving membrane association of the complex.

It is found in the late endosome. Its function is as follows. Positive regulator of the Rab7 guanyl-nucleotide exchange activity of the Mon1-Ccz1 complex, possibly by enhancing its endosomal membrane association. As part of the Mon1-Ccz1 complex involved in endolysosomal biogenesis possibly by mediating Rab conversion, the replacement of Rab5 with Rab7 during late endosome maturation. In Drosophila melanogaster (Fruit fly), this protein is Regulator of MON1-CCZ1 complex.